Here is a 278-residue protein sequence, read N- to C-terminus: Thioredoxin-related transmembrane protein 1 (278 aa).

The N-terminal stretch at 1–26 is a signal peptide; the sequence is MAPSGSLRIPVAVLLLLLWGAPWAHG. The region spanning 27-132 is the Thioredoxin domain; it reads KRSDVRIITD…FINFISDKEW (106 aa). Topologically, residues 27 to 180 are extracellular; the sequence is KRSDVRIITD…EDLGLPIWGS (154 aa). Residues Cys56 and Cys59 each act as nucleophile in the active site. The cysteines at positions 56 and 59 are disulfide-linked. The chain crosses the membrane as a helical span at residues 181-203; sequence YTVFALATLLSGLLLGLFMIFVA. Residues 204–278 lie on the Cytoplasmic side of the membrane; it reads DCLCPSKRRR…VGPSLATDKS (75 aa). S-palmitoyl cysteine attachment occurs at residues Cys205 and Cys207. The tract at residues 213 to 278 is disordered; it reads RPQPYPSRKL…VGPSLATDKS (66 aa). Residues Ser226, Ser245, Ser268, Ser272, and Ser278 each carry the phosphoserine modification. A compositionally biased stretch (acidic residues) spans 235 to 250; the sequence is EEQEADVEDVSEEESE.

In terms of assembly, interacts with ATP2A2. Palmitoylated; palmitoylation is required for localization to mitochondria-associated endoplasmic reticulum membrane (MAM).

It is found in the endoplasmic reticulum membrane. The protein resides in the mitochondrion membrane. It localises to the secreted. It catalyses the reaction Catalyzes the rearrangement of -S-S- bonds in proteins.. In terms of biological role, thiredoxin domain-containing protein that participates in various redox reactions through the reversible oxidation of its active center dithiol to a disulfide and catalyze dithiol-disulfide exchange reactions. Acts as a key inhibitor of the alternative triglyceride biosynthesis pathway by inhibiting the activity of TMEM68/DIESL at the endoplasmic reticulum, thereby restricting accumulation of triacylglycerol. The alternative triglyceride biosynthesis pathway mediates formation of triacylglycerol from diacylglycerol and membrane phospholipids. Acts as a protein disulfide isomerase by catalyzing formation or reduction of disulfide bonds. Specifically mediates formation of disulfide bonds of transmembrane proteins at the endoplasmic reticulum membrane. Involved in endoplasmic reticulum-associated degradation (ERAD) via its protein disulfide isomerase activity by acting on folding-defective polypeptides at the endoplasmic reticulum membrane. Acts as a negative regulator of platelet aggregation following secretion in the extracellular space. Acts as a regulator of endoplasmic reticulum-mitochondria contact sites via its ability to regulate redox signals. Regulates endoplasmic reticulum-mitochondria Ca(2+) flux. This Bos taurus (Bovine) protein is Thioredoxin-related transmembrane protein 1 (TMX1).